We begin with the raw amino-acid sequence, 60 residues long: Large ribosomal subunit protein bL32 (60 aa).

Belongs to the bacterial ribosomal protein bL32 family.

The polypeptide is Large ribosomal subunit protein bL32 (Thermosipho melanesiensis (strain DSM 12029 / CIP 104789 / BI429)).